A 192-amino-acid polypeptide reads, in one-letter code: Thymidylate kinase (192 aa).

Position 7–14 (7–14) interacts with ATP; sequence GVDGVGKS.

It belongs to the thymidylate kinase family.

The enzyme catalyses dTMP + ATP = dTDP + ADP. Phosphorylation of dTMP to form dTDP in both de novo and salvage pathways of dTTP synthesis. The polypeptide is Thymidylate kinase (Campylobacter fetus subsp. fetus (strain 82-40)).